We begin with the raw amino-acid sequence, 350 residues long: Phosphoribosylformylglycinamidine cyclo-ligase (350 aa).

This sequence belongs to the AIR synthase family.

It is found in the cytoplasm. It carries out the reaction 2-formamido-N(1)-(5-O-phospho-beta-D-ribosyl)acetamidine + ATP = 5-amino-1-(5-phospho-beta-D-ribosyl)imidazole + ADP + phosphate + H(+). The protein operates within purine metabolism; IMP biosynthesis via de novo pathway; 5-amino-1-(5-phospho-D-ribosyl)imidazole from N(2)-formyl-N(1)-(5-phospho-D-ribosyl)glycinamide: step 2/2. This chain is Phosphoribosylformylglycinamidine cyclo-ligase, found in Pseudoalteromonas translucida (strain TAC 125).